We begin with the raw amino-acid sequence, 570 residues long: Double-stranded RNA-binding protein Staufen homolog 2 (570 aa).

One can recognise a DRBM 1 domain in the interval 8 to 75; that stretch reads TAMCLVNELA…ANKALTESTL (68 aa). Disordered stretches follow at residues 71–94 and 181–203; these read TEST…PGSI and NEPI…DDKD. The segment covering 83–94 has biased composition (polar residues); that stretch reads PKSNVNNNPGSI. Positions 95-181 constitute a DRBM 2 domain; sequence TPTVELNGLA…AMKALQALQN (87 aa). Ser-188 is modified (phosphoserine). The span at 194 to 203 shows a compositional bias: basic and acidic residues; sequence SGKDVDDDKD. 2 DRBM domains span residues 207–274 and 307–375; these read SEIS…ELKK and NPIS…QLGY. 2 short sequence motifs (nuclear localization signal) span residues 273-291 and 373-412; these read KKLP…FKKR and LGYK…PKGI. A required for dendritic transport region spans residues 381–570; sequence LQDQLEKTGE…QDCKKSNSAV (190 aa). Positions 387-409 are disordered; sequence KTGENKGWSGPKPGFPEPTNNTP. Position 395 is a phosphoserine (Ser-395). The residue at position 405 (Thr-405) is a Phosphothreonine. Phosphoserine is present on residues Ser-416, Ser-426, Ser-440, Ser-455, and Ser-492. Positions 528–570 are disordered; it reads DGAMNIEKGSLEKQAKHLREKADNNQAPPGSIAQDCKKSNSAV. Residues 536-550 are compositionally biased toward basic and acidic residues; sequence GSLEKQAKHLREKAD.

In terms of assembly, interacts with the exportin XPO5. This requires RNA and RAN bound to GTP. Interacts with microtubules. Isoform 2 and isoform 3 may also interact with ribosomes, and this association is independent of translation. Identified in a mRNP complex, at least composed of DHX9, DDX3X, ELAVL1, HNRNPU, IGF2BP1, ILF3, PABPC1, PCBP2, PTBP2, STAU1, STAU2, SYNCRIP and YBX1. Interacts with TRIM71 (via NHL repeats) in an RNA-dependent manner.

Its subcellular location is the cytoplasm. The protein resides in the nucleus. The protein localises to the nucleolus. It is found in the endoplasmic reticulum. Functionally, RNA-binding protein required for the microtubule-dependent transport of neuronal RNA from the cell body to the dendrite. As protein synthesis occurs within the dendrite, the localization of specific mRNAs to dendrites may be a prerequisite for neurite outgrowth and plasticity at sites distant from the cell body. The protein is Double-stranded RNA-binding protein Staufen homolog 2 (STAU2) of Homo sapiens (Human).